The following is a 145-amino-acid chain: Arginine repressor (145 aa).

This sequence belongs to the ArgR family.

The protein resides in the cytoplasm. The protein operates within amino-acid biosynthesis; L-arginine biosynthesis [regulation]. Regulates arginine biosynthesis genes. The sequence is that of Arginine repressor from Streptococcus mutans serotype c (strain ATCC 700610 / UA159).